A 679-amino-acid polypeptide reads, in one-letter code: Protein polyglycylase TTLL10 (679 aa).

Over residues 1 to 15 the composition is skewed to basic residues; the sequence is MPLHPPARRPHGHRR. Disordered regions lie at residues 1–33, 49–77, and 96–124; these read MPLHPPARRPHGHRRNGSEAQTEATTQDTGRLS, GHRAARRPRRGVGTTSASRAPRPGALMPA, and VSFKRPKRSRTHQSHTKVPGWTHEKRMGS. A compositionally biased stretch (polar residues) spans 18 to 30; the sequence is SEAQTEATTQDTG. Positions 96-110 are enriched in basic residues; that stretch reads VSFKRPKRSRTHQSH. Residues 172 to 543 form the TTL domain; it reads QGPFFYIGGT…TCQKSLHSQK (372 aa). ATP-binding positions include Lys304, 310–311, 353–356, 366–368, and 409–410; these read QG, QRYV, KFD, and TN. Position 310 (Gln310) interacts with a protein. Positions 489, 502, and 504 each coordinate Mg(2+). The tract at residues 605–679 is disordered; it reads DRPAARKSMS…EQRSTSHRGS (75 aa).

Mg(2+) serves as cofactor.

It localises to the cytoplasm. It is found in the cytoskeleton. The protein resides in the cell projection. Its subcellular location is the cilium. The protein localises to the cilium axoneme. It carries out the reaction (glycyl)(n)-glycyl-L-glutamyl-[protein] + glycine + ATP = (glycyl)(n+1)-glycyl-L-glutamyl-[protein] + ADP + phosphate + H(+). In terms of biological role, polyglycylase which modifies both tubulin and non-tubulin proteins, generating polyglycine side chains of variable lengths on the gamma-carboxyl groups of specific glutamate residues of target proteins. Involved in the elongation step rather than the initiation step of the polyglycylation reaction. Polyglycylates alpha-tubulin and beta-tubulin. Polyglycylates non-tubulin proteins such as nucleosome assembly protein NAP1. The polypeptide is Protein polyglycylase TTLL10 (Rattus norvegicus (Rat)).